The sequence spans 454 residues: Chromosomal replication initiator protein DnaA (454 aa).

Residues 1–83 (MMTDSMRLVW…RPLKVLLEVA (83 aa)) are domain I, interacts with DnaA modulators. The interval 83–115 (AECVAEAPETPEEAPQQLCLPAFADIPRPSSGR) is domain II. Positions 116–333 (LLNRDFTFDS…SGIKGLAARN (218 aa)) are domain III, AAA+ region. ATP contacts are provided by Gly-160, Gly-162, Lys-163, and Ser-164. The domain IV, binds dsDNA stretch occupies residues 334-454 (SIMGRGIDLK…LCGKIEAGEF (121 aa)).

This sequence belongs to the DnaA family. In terms of assembly, oligomerizes as a right-handed, spiral filament on DNA at oriC.

The protein localises to the cytoplasm. In terms of biological role, plays an essential role in the initiation and regulation of chromosomal replication. ATP-DnaA binds to the origin of replication (oriC) to initiate formation of the DNA replication initiation complex once per cell cycle. Binds the DnaA box (a 9 base pair repeat at the origin) and separates the double-stranded (ds)DNA. Forms a right-handed helical filament on oriC DNA; dsDNA binds to the exterior of the filament while single-stranded (ss)DNA is stabiized in the filament's interior. The ATP-DnaA-oriC complex binds and stabilizes one strand of the AT-rich DNA unwinding element (DUE), permitting loading of DNA polymerase. After initiation quickly degrades to an ADP-DnaA complex that is not apt for DNA replication. Binds acidic phospholipids. The protein is Chromosomal replication initiator protein DnaA of Desulfatibacillum aliphaticivorans.